A 418-amino-acid polypeptide reads, in one-letter code: Gamma-glutamyl phosphate reductase (418 aa).

Belongs to the gamma-glutamyl phosphate reductase family.

The protein localises to the cytoplasm. The enzyme catalyses L-glutamate 5-semialdehyde + phosphate + NADP(+) = L-glutamyl 5-phosphate + NADPH + H(+). Its pathway is amino-acid biosynthesis; L-proline biosynthesis; L-glutamate 5-semialdehyde from L-glutamate: step 2/2. Catalyzes the NADPH-dependent reduction of L-glutamate 5-phosphate into L-glutamate 5-semialdehyde and phosphate. The product spontaneously undergoes cyclization to form 1-pyrroline-5-carboxylate. The sequence is that of Gamma-glutamyl phosphate reductase from Colwellia psychrerythraea (strain 34H / ATCC BAA-681) (Vibrio psychroerythus).